The following is a 219-amino-acid chain: Hemolysin-3 (219 aa).

Helical transmembrane passes span 19-39 (AITHGIGAILSIPALIILIIH), 49-69 (VVAFTVYGVSMFLLYLFSTLL), 83-103 (ILDHSAIYLLIAGTYTPFLLI), 112-132 (TLLAIIWTLAIGGIIFKIFFV), 138-158 (ASTLCYIIMGWLIIVAIKPLY), 165-185 (GFSLLLAGGILYSVGAIFFLW), and 194-214 (IWHLFVLGGSAMMFFCVLFYV).

The protein belongs to the UPF0073 (Hly-III) family.

The protein resides in the cell membrane. Its function is as follows. Might be virulent against a mammalian host; when expressed in E.coli, the soluble extract has hemolytic activity on human erythrocytes. The activity is not inhibited by cholesterol or activated by 2-mercaptoethanol. Might be pore-forming protein. Its in vivo role in virulence is untested, nor has it been shown to be secreted by B.cereus. This Bacillus cereus protein is Hemolysin-3.